A 429-amino-acid chain; its full sequence is Prenyltransferase okaC (429 aa).

The dimethylallyl diphosphate site is built by R101, K189, Y191, K257, Y259, Y342, Y406, and Y410.

Belongs to the tryptophan dimethylallyltransferase family.

The catalysed reaction is cyclo(L-Trp-L-Trp) + 2 dimethylallyl diphosphate = cyclo(N(8)-(alpha,alpha-dimethylallyl)-L-Trp-6a-(alpha,alpha-dimethylallyl)-L-Trp) + 2 diphosphate. It functions in the pathway alkaloid biosynthesis. Prenyltransferase; part of the gene cluster that mediates the biosynthesis of okaramine B, a prenylated indole alkaloid that possesses an unusual octacyclic ring system, including a four-membered azetidine ring and an eight-membered azocine ring, and that exhibits insecticidal activity against silkworm larvae. Within the pathway, okaC performs asymmetric reverse prenylation of cyclo(L-Trp-L-Trp) at N-1 and C-2' of the indole ring to produce the cyclic prenylated tryptophan dimer cyclo(N8-(alpha,alpha-dimethylallyl)-L-Trp-6a-(alpha,alpha-dime-thylallyl)-L-Trp). The biosynthesis begins with the NRPS okaA that condenses two tryptophan molecules into cyclo(L-Trp-L-Trp). Prenylation by the prenyltransferase okaC then leads to the formation of cyclo(N8-(alpha,alpha-dimethylallyl)-L-Trp-6a-(alpha,alpha-dime-thylallyl)-L-Trp). This is followed by indole 2,3-epoxidation by the FAD-dependent monooxygenase okaB to facilitate the formation of the hexahydropyrrolo[2,3-b]indole (HPI) moiety of okaramine C. The cytochrome P450 monooxygenase okaD then likely catalyzes formation of the eight-membered ring of okaramine A. The dioxygenase okaE further forms the unusual 2-dimethyl-3-methyl-azetidine ring to yield 12-deshydroxyl okaramine E, as well as the hydroxylation of 12-deshydroxyl okaramine E to produce okaramine E. The cytochrome P450 monoxygenase okaG converts 12-deshydroxyl okaramine E into 3-desmethyl okaramine B which is further methylated by the methyltransferase okaF into okaramine B. In a shunt pathway, okaG and okaF together are also able to convert okaramine E into okaramine D. Okaramine H is produced by nonenzymatic conversion from okaramine A. The polypeptide is Prenyltransferase okaC (Penicillium ochrochloron).